The primary structure comprises 266 residues: 2-dehydro-3-deoxy-D-gluconate/2-dehydro-3-deoxy-phosphogluconate aldolase (266 aa).

Residues 36–37 (ST), 123–125 (YNI), and 151–153 (KDS) contribute to the substrate site. The Schiff-base intermediate with substrate role is filled by lysine 151.

This sequence belongs to the DapA family. KDPG aldolase subfamily. In terms of assembly, homotetramer; dimer of dimers.

It carries out the reaction 2-dehydro-3-deoxy-6-phospho-D-gluconate = D-glyceraldehyde 3-phosphate + pyruvate. It catalyses the reaction 2-dehydro-3-deoxy-D-gluconate = D-glyceraldehyde + pyruvate. The catalysed reaction is 2-dehydro-3-deoxy-6-phospho-D-galactonate = D-glyceraldehyde 3-phosphate + pyruvate. The enzyme catalyses 2-dehydro-3-deoxy-D-galactonate = D-glyceraldehyde + pyruvate. It participates in carbohydrate acid metabolism; 2-dehydro-3-deoxy-D-gluconate degradation; D-glyceraldehyde 3-phosphate and pyruvate from 2-dehydro-3-deoxy-D-gluconate: step 2/2. In terms of biological role, involved in the degradation of glucose via the Entner-Doudoroff pathway. Catalyzes the reversible cleavage of 2-keto-3-deoxy-6-phosphogluconate (KDPG) and 2-keto-3-deoxygluconate (KDG) forming pyruvate and glyceraldehyde 3-phosphate or glyceraldehyde, respectively. It is also able to catalyze the reversible cleavage of 2-keto-3-deoxy-6-phosphogalactonate (KDPGal) and 2-keto-3-deoxygalactonate (KDGal). It is equally active with both D- and L-glyceraldehyde. The polypeptide is 2-dehydro-3-deoxy-D-gluconate/2-dehydro-3-deoxy-phosphogluconate aldolase (Picrophilus torridus (strain ATCC 700027 / DSM 9790 / JCM 10055 / NBRC 100828 / KAW 2/3)).